The sequence spans 275 residues: uncharacterized protein (275 aa).

Asp-45 is an NADPH binding site. Catalysis depends on proton donor residues Tyr-50 and His-111. NADPH-binding residues include Ser-139, Gln-162, Leu-191, Lys-196, Ser-232, Ser-233, and Arg-237.

This sequence belongs to the aldo/keto reductase family.

The protein localises to the cytoplasm. It is found in the nucleus. This is an uncharacterized protein from Schizosaccharomyces pombe (strain 972 / ATCC 24843) (Fission yeast).